The following is a 58-amino-acid chain: Small ribosomal subunit protein eS31 (58 aa).

Residues C29, C32, C48, and C51 each contribute to the Zn(2+) site. A C4-type zinc finger spans residues 29-51; it reads CPRCGSFMAHHLKPVPRWHCGKC.

It belongs to the eukaryotic ribosomal protein eS31 family. In terms of assembly, part of the 30S ribosomal subunit. Zn(2+) serves as cofactor.

This chain is Small ribosomal subunit protein eS31, found in Ignicoccus hospitalis (strain KIN4/I / DSM 18386 / JCM 14125).